Reading from the N-terminus, the 921-residue chain is Valine--tRNA ligase (921 aa).

Residues 40–50 carry the 'HIGH' region motif; the sequence is PNVTGSLHMGH. Residues 522–526 carry the 'KMSKS' region motif; it reads KMSKS. ATP is bound at residue Lys525. The stretch at 849–921 forms a coiled coil; the sequence is MADLIDKEAE…LQHKNRIESL (73 aa).

The protein belongs to the class-I aminoacyl-tRNA synthetase family. ValS type 1 subfamily. Monomer.

It is found in the cytoplasm. It catalyses the reaction tRNA(Val) + L-valine + ATP = L-valyl-tRNA(Val) + AMP + diphosphate. Functionally, catalyzes the attachment of valine to tRNA(Val). As ValRS can inadvertently accommodate and process structurally similar amino acids such as threonine, to avoid such errors, it has a 'posttransfer' editing activity that hydrolyzes mischarged Thr-tRNA(Val) in a tRNA-dependent manner. This chain is Valine--tRNA ligase, found in Legionella pneumophila (strain Paris).